A 234-amino-acid polypeptide reads, in one-letter code: Ubiquinone biosynthesis O-methyltransferase (234 aa).

Residues R40, G59, D80, and M123 each contribute to the S-adenosyl-L-methionine site.

It belongs to the methyltransferase superfamily. UbiG/COQ3 family.

The enzyme catalyses a 3-demethylubiquinol + S-adenosyl-L-methionine = a ubiquinol + S-adenosyl-L-homocysteine + H(+). It carries out the reaction a 3-(all-trans-polyprenyl)benzene-1,2-diol + S-adenosyl-L-methionine = a 2-methoxy-6-(all-trans-polyprenyl)phenol + S-adenosyl-L-homocysteine + H(+). The protein operates within cofactor biosynthesis; ubiquinone biosynthesis. In terms of biological role, O-methyltransferase that catalyzes the 2 O-methylation steps in the ubiquinone biosynthetic pathway. This is Ubiquinone biosynthesis O-methyltransferase from Coxiella burnetii (strain CbuG_Q212) (Coxiella burnetii (strain Q212)).